The chain runs to 427 residues: MPSNFFIPDPEGQVPSAEGYFGAFGGKFIPEALVAAVDEVAVEYDKAKSDPEFARELDDLLVHYTGRPSALTEVPRFAAEAGGARIFLKREDLNHTGSHKINNVLGQALLTKRMGKTRVIAETGAGQHGVATATACALFGLDCTIYMGEIDTRRQALNVARMRMLGAEVIAVKSGSRTLKDAINEAFRDWVANVDRTHYLFGTVAGPHPFPAMVRDFHRVIGVEARRQLLEQAGRLPDAAIACVGGGSNAIGLFHAFIPDADVRLIGCEPAGHGVETGEHAATLTAGEPGILHGSRSYVLQDDEGQITEPYSISAGLDYPGIGPEHAYLKDSGRGEYRAVTDDAAMQALRLLSRTEGIIPAIESAHALAGALEVGRELGRDGLLVVNLSGRGDKDMDTAARYFGLYDTDAEVAADGTGAAEIEGDAK.

An N6-(pyridoxal phosphate)lysine modification is found at Lys-100.

It belongs to the TrpB family. Tetramer of two alpha and two beta chains. Pyridoxal 5'-phosphate is required as a cofactor.

The enzyme catalyses (1S,2R)-1-C-(indol-3-yl)glycerol 3-phosphate + L-serine = D-glyceraldehyde 3-phosphate + L-tryptophan + H2O. Its pathway is amino-acid biosynthesis; L-tryptophan biosynthesis; L-tryptophan from chorismate: step 5/5. Its function is as follows. The beta subunit is responsible for the synthesis of L-tryptophan from indole and L-serine. The chain is Tryptophan synthase beta chain (trpB) from Streptomyces coelicolor (strain ATCC BAA-471 / A3(2) / M145).